A 417-amino-acid chain; its full sequence is Ribulose bisphosphate carboxylase large chain (417 aa).

Substrate-binding residues include asparagine 103 and threonine 153. The active-site Proton acceptor is lysine 155. Lysine 157 serves as a coordination point for substrate. Positions 181, 183, and 184 each coordinate Mg(2+). Residue lysine 181 is modified to N6-carboxylysine. Histidine 274 serves as the catalytic Proton acceptor. Residues arginine 275, histidine 307, and serine 359 each contribute to the substrate site.

The protein belongs to the RuBisCO large chain family. Type I subfamily. As to quaternary structure, heterohexadecamer of 8 large chains and 8 small chains. It depends on Mg(2+) as a cofactor.

It is found in the plastid. The protein localises to the chloroplast. The enzyme catalyses 2 (2R)-3-phosphoglycerate + 2 H(+) = D-ribulose 1,5-bisphosphate + CO2 + H2O. It catalyses the reaction D-ribulose 1,5-bisphosphate + O2 = 2-phosphoglycolate + (2R)-3-phosphoglycerate + 2 H(+). Functionally, ruBisCO catalyzes two reactions: the carboxylation of D-ribulose 1,5-bisphosphate, the primary event in carbon dioxide fixation, as well as the oxidative fragmentation of the pentose substrate in the photorespiration process. Both reactions occur simultaneously and in competition at the same active site. The sequence is that of Ribulose bisphosphate carboxylase large chain from Acrostichum aureum (Golden leather fern).